The following is a 156-amino-acid chain: Ribosomal RNA large subunit methyltransferase H (156 aa).

Residues Leu73, Gly104, and 123 to 128 (LSSLTL) each bind S-adenosyl-L-methionine.

Belongs to the RNA methyltransferase RlmH family. Homodimer.

The protein resides in the cytoplasm. It catalyses the reaction pseudouridine(1915) in 23S rRNA + S-adenosyl-L-methionine = N(3)-methylpseudouridine(1915) in 23S rRNA + S-adenosyl-L-homocysteine + H(+). Functionally, specifically methylates the pseudouridine at position 1915 (m3Psi1915) in 23S rRNA. The protein is Ribosomal RNA large subunit methyltransferase H of Bordetella avium (strain 197N).